We begin with the raw amino-acid sequence, 426 residues long: UPF0597 protein CLD_2825 (426 aa).

Belongs to the UPF0597 family.

The sequence is that of UPF0597 protein CLD_2825 from Clostridium botulinum (strain Okra / Type B1).